A 336-amino-acid polypeptide reads, in one-letter code: Succinylglutamate desuccinylase (336 aa).

Positions 59, 62, and 151 each coordinate Zn(2+). Residue Glu215 is part of the active site.

Belongs to the AspA/AstE family. Succinylglutamate desuccinylase subfamily. Zn(2+) serves as cofactor.

The enzyme catalyses N-succinyl-L-glutamate + H2O = L-glutamate + succinate. It functions in the pathway amino-acid degradation; L-arginine degradation via AST pathway; L-glutamate and succinate from L-arginine: step 5/5. Functionally, transforms N(2)-succinylglutamate into succinate and glutamate. This Pseudomonas fluorescens (strain ATCC BAA-477 / NRRL B-23932 / Pf-5) protein is Succinylglutamate desuccinylase.